Consider the following 438-residue polypeptide: Dihydrolipoyllysine-residue acetyltransferase component of pyruvate dehydrogenase complex (438 aa).

The Lipoyl-binding domain occupies 1–76; sequence MFKVKFADIG…KVGDVVMEIE (76 aa). Lys-42 is modified (N6-lipoyllysine). Residues 132–169 enclose the Peripheral subunit-binding (PSBD) domain; the sequence is KATPLARKVAADLNIDLSLVTPTGPNQRILVADIKNHQ. Positions 172–181 are enriched in polar residues; the sequence is STQLASQPIS. A disordered region spans residues 172–192; the sequence is STQLASQPISQPAPTPSPSAH. The active site involves His-411.

The protein belongs to the 2-oxoacid dehydrogenase family. As to quaternary structure, forms a 24-polypeptide structural core with octahedral symmetry. It depends on (R)-lipoate as a cofactor.

It carries out the reaction N(6)-[(R)-dihydrolipoyl]-L-lysyl-[protein] + acetyl-CoA = N(6)-[(R)-S(8)-acetyldihydrolipoyl]-L-lysyl-[protein] + CoA. Functionally, the pyruvate dehydrogenase complex catalyzes the overall conversion of pyruvate to acetyl-CoA and CO(2). It contains multiple copies of three enzymatic components: pyruvate dehydrogenase (E1), dihydrolipoamide acetyltransferase (E2) and lipoamide dehydrogenase (E3). This Mycoplasma capricolum subsp. capricolum (strain California kid / ATCC 27343 / NCTC 10154) protein is Dihydrolipoyllysine-residue acetyltransferase component of pyruvate dehydrogenase complex (pdhC).